Consider the following 847-residue polypeptide: Signal transducer and activator of transcription 6 (847 aa).

Residue Ser-2 is modified to N-acetylserine. An SH2 domain is found at 517-632; sequence WFDGVLDLTK…EAFRSHYKPE (116 aa). Residue Tyr-641 is modified to Phosphotyrosine; by JAK. The short motif at 802–806 is the LXXLL motif element; the sequence is LTKLL. A disordered region spans residues 809–847; the sequence is GQGESGGGSLGAQPLLQPSHYGQSGISMSHMDLRANPSW.

It belongs to the transcription factor STAT family. As to quaternary structure, forms a homodimer or a heterodimer with a related family member. Interacts with NCOA1 via its C-terminal LXXLL motif. Tyrosine phosphorylated on Tyr-641 following stimulation by IL4/interleukin-4. Tyrosine phosphorylated following stimulation by IL3/interleukin-3. Dephosphorylation on tyrosine residues by PTPN2 negatively regulates the IL4/interleukin-4 mediated signaling. In terms of processing, mono-ADP-ribosylated by PARP14.

The protein resides in the cytoplasm. It localises to the nucleus. In terms of biological role, carries out a dual function: signal transduction and activation of transcription. Involved in IL4/interleukin-4- and IL3/interleukin-3-mediated signaling. This Homo sapiens (Human) protein is Signal transducer and activator of transcription 6 (STAT6).